We begin with the raw amino-acid sequence, 135 residues long: Photosystem II extrinsic protein U (135 aa).

An N-terminal signal peptide occupies residues 1–29 (MKRLLSWLTGALVMASLMAGLVMPSSVYA).

Belongs to the PsbU family. PSII is composed of 1 copy each of membrane proteins PsbA, PsbB, PsbC, PsbD, PsbE, PsbF, PsbH, PsbI, PsbJ, PsbK, PsbL, PsbM, PsbT, PsbX, PsbY, PsbZ, Psb30/Ycf12, peripheral proteins PsbO, CyanoQ (PsbQ), PsbU, PsbV and a large number of cofactors. It forms dimeric complexes.

The protein resides in the cellular thylakoid membrane. Its function is as follows. One of the extrinsic, lumenal subunits of photosystem II (PSII). PSII is a light-driven water plastoquinone oxidoreductase, using light energy to abstract electrons from H(2)O, generating a proton gradient subsequently used for ATP formation. The extrinsic proteins stabilize the structure of photosystem II oxygen-evolving complex (OEC), the ion environment of oxygen evolution and protect the OEC against heat-induced inactivation. The sequence is that of Photosystem II extrinsic protein U from Synechococcus sp. (strain CC9605).